The following is a 6885-amino-acid chain: Nesprin-2 (6885 aa).

Residues M1–K286 form an actin-binding region. Residues M1–R6834 lie on the Cytoplasmic side of the membrane. Calponin-homology (CH) domains follow at residues D31–H136 and M181–K286. Spectrin repeat units follow at residues G297–N378, A379–N472, I473–Y575, N576–Q680, V735–T838, D839–E932, and L933–S1034. Residues G297–E6782 are a coiled coil. Residue S841 is modified to Phosphoserine. An N6-acetyllysine modification is found at K955. Positions P1042 to N1059 are enriched in polar residues. Residues P1042–E1084 form a disordered region. Spectrin repeat units follow at residues T1121 to T1212, N1263 to K1323, A1324 to Q1419, E1420 to T1524, E1525 to D1636, Y1637 to S1738, N1739 to S1830, V1831 to L1938, E1939 to D2036, K2037 to T2132, Y2133 to N2243, and L2244 to I2360. Residues E2368–A2382 show a composition bias toward basic and acidic residues. Positions E2368–A2394 are disordered. The span at T2383–S2393 shows a compositional bias: polar residues. 16 Spectrin repeats span residues D2432–K2513, N2514–Q2620, Q2621–E2717, P2718–F2831, K2832–N2933, T2934–K3036, Q3037–L3142, E3143–T3248, N3249–T3352, E3353–E3465, E3466–K3573, N3574–V3679, L3680–T3777, S3778–E3880, S3881–E3986, and Q3987–V4086. S2781 carries the phosphoserine modification. 2 stretches are compositionally biased toward basic and acidic residues: residues Q4073–L4083 and V4093–K4102. Disordered regions lie at residues Q4073–I4162, D4184–P4232, E4335–L4363, and H4416–N4448. Position 4108 is a phosphoserine (S4108). Composition is skewed to basic and acidic residues over residues S4122–E4134 and W4144–A4155. A Spectrin 36 repeat occupies K4229–K4348. Residues E4335–E4356 show a composition bias toward basic and acidic residues. Residues T4421–E4434 are compositionally biased toward polar residues. 17 Spectrin repeats span residues N4520–Q4639, N4640–Y4727, T4728–L4837, Q4838–L4943, K4944–L5051, H5052–H5164, L5165–N5266, Q5267–S5391, N5392–V5487, K5488–L5589, Q5590–D5704, F5705–A5799, E5800–I5907, R5908–L6017, K6018–W6135, R6136–F6243, and T6244–E6355. S5785 carries the phosphoserine modification. A compositionally biased stretch (acidic residues) spans L6354 to M6367. A disordered region spans residues L6354 to R6508. Residues S6361, S6384, S6411, S6428, S6429, S6430, and S6459 each carry the phosphoserine modification. Residues E6368–S6384 are compositionally biased toward basic and acidic residues. 3 Spectrin repeats span residues S6461 to I6549, K6550 to D6665, and F6666 to E6782. The span at P6463–R6474 shows a compositional bias: basic and acidic residues. The span at P6477–P6489 shows a compositional bias: pro residues. Low complexity predominate over residues P6490–G6499. A disordered region spans residues G6769–P6824. Positions R6826 to T6885 constitute a KASH domain. The chain crosses the membrane as a helical; Anchor for type IV membrane protein span at residues A6835–S6855. Residues S6856–T6885 are Perinuclear space-facing. The interval F6872–T6885 is sufficient for interaction with SUN2.

Belongs to the nesprin family. Core component of LINC complexes which are composed of inner nuclear membrane SUN domain-containing proteins coupled to outer nuclear membrane KASH domain-containing nesprins. SUN and KASH domain-containing proteins seem to bind each other promiscuously; however, some LINC complex constituents are tissue- or cell type-specific. At least SUN1/2-containing core LINC complexes are proposed to be hexameric composed of three protomers of each KASH and SUN domain-containing protein. The SUN2:SYNE2/KASH2 complex is a heterohexamer; the homotrimeric cloverleave-like conformation of the SUN domain is a prerequisite for LINC complex formation in which three separate SYNE2/KASH2 peptides bind at the interface of adjacent SUN domains. Interacts with EMD, LMNA, MKS3 and F-actin via its N-terminal domain. Interacts with DCTN1 and DYNC1I1/2; suggesting the association with the dynein-dynactin motor complex. Associates with kinesin motor complexes. Interacts with TMEM67. Interacts (via KASH domain) with TMEM258. Interacts with BROX; this interaction promotes SYN2 ubiquitination and facilitates the relaxation of mechanical stress imposed by compressive actin fibers at the rupture site. Post-translationally, the disulfid bond with SUN2 is required for stability of the SUN2:SYNE2/KASH2 LINC complex under tensile forces though not required for the interaction. Ubiquitinated, targeting it for degradation. As to expression, widely expressed, with higher level in kidney, adult and fetal liver, stomach and placenta. Weakly expressed in skeletal muscle and brain. Isoform 5 is highly expressed in pancreas, skeletal muscle and heart.

The protein resides in the nucleus outer membrane. Its subcellular location is the sarcoplasmic reticulum membrane. It localises to the cell membrane. The protein localises to the cytoplasm. It is found in the cytoskeleton. The protein resides in the mitochondrion. Its subcellular location is the nucleus. It localises to the nucleoplasm. The protein localises to the myofibril. It is found in the sarcomere. The protein resides in the z line. Its subcellular location is the cell junction. It localises to the focal adhesion. Functionally, multi-isomeric modular protein which forms a linking network between organelles and the actin cytoskeleton to maintain the subcellular spatial organization. As a component of the LINC (LInker of Nucleoskeleton and Cytoskeleton) complex involved in the connection between the nuclear lamina and the cytoskeleton. The nucleocytoplasmic interactions established by the LINC complex play an important role in the transmission of mechanical forces across the nuclear envelope and in nuclear movement and positioning. Specifically, SYNE2 and SUN2 assemble in arrays of transmembrane actin-associated nuclear (TAN) lines which are bound to F-actin cables and couple the nucleus to retrograde actin flow during actin-dependent nuclear movement. May be involved in nucleus-centrosome attachment. During interkinetic nuclear migration (INM) at G2 phase and nuclear migration in neural progenitors its LINC complex association with SUN1/2 and probable association with cytoplasmic dynein-dynactin motor complexes functions to pull the nucleus toward the centrosome; SYNE1 and SYNE2 may act redundantly. During INM at G1 phase mediates respective LINC complex association with kinesin to push the nucleus away from the centrosome. Involved in nuclear migration in retinal photoreceptor progenitors. Required for centrosome migration to the apical cell surface during early ciliogenesis. Facilitates the relaxation of mechanical stress imposed by compressive actin fibers at the rupture site through its nteraction with SYN2. The polypeptide is Nesprin-2 (Homo sapiens (Human)).